A 598-amino-acid polypeptide reads, in one-letter code: EF-hand and coiled-coil domain-containing protein 1 (598 aa).

Residues 1 to 22 are disordered; the sequence is MEPVSTGAEAGMEGAGGDPYRR. The EF-hand domain maps to 54 to 89; that stretch reads GLDQYLQEVFHHLDCRGAGRLPRADFRALCAVLGLR. Disordered regions lie at residues 96-127, 175-198, and 326-411; these read AGQAAGDGNSRDVTPGDAAAELATDGDSDTDE, RLRRPRRRRRPPCAPGPDSGPDCE, and YRSE…KKTP. Residues 175–185 are compositionally biased toward basic residues; sequence RLRRPRRRRRP. Residues 196–303 are a coiled coil; sequence DCERVARLEE…RSLHRVRELE (108 aa). Positions 343–359 are enriched in basic and acidic residues; that stretch reads PGDKSNEPEDAGTRDPD. Positions 394-404 are enriched in acidic residues; sequence SDEEEVEEERW. A coiled-coil region spans residues 479 to 533; it reads TSEEEAELQQKVEENEHLRLELQMVETERVRLSLLEEKLVDVLQLLQRLRDLNIS.

The sequence is that of EF-hand and coiled-coil domain-containing protein 1 (EFCC1) from Homo sapiens (Human).